The chain runs to 214 residues: Ribosomal RNA small subunit methyltransferase G (214 aa).

Residues Gly-56, Phe-61, 107–108, and Arg-125 each bind S-adenosyl-L-methionine; that span reads IE.

Belongs to the methyltransferase superfamily. RNA methyltransferase RsmG family.

It localises to the cytoplasm. In terms of biological role, specifically methylates the N7 position of a guanine in 16S rRNA. The chain is Ribosomal RNA small subunit methyltransferase G from Syntrophomonas wolfei subsp. wolfei (strain DSM 2245B / Goettingen).